The primary structure comprises 344 residues: tRNA-specific 2-thiouridylase MnmA (344 aa).

Residues 9 to 16 (AMSGGVDS) and M34 contribute to the ATP site. C92 (nucleophile) is an active-site residue. An intrachain disulfide couples C92 to C188. ATP is bound at residue G116. Residues 138–140 (KDQ) form an interaction with tRNA region. Catalysis depends on C188, which acts as the Cysteine persulfide intermediate.

The protein belongs to the MnmA/TRMU family.

The protein localises to the cytoplasm. The catalysed reaction is S-sulfanyl-L-cysteinyl-[protein] + uridine(34) in tRNA + AH2 + ATP = 2-thiouridine(34) in tRNA + L-cysteinyl-[protein] + A + AMP + diphosphate + H(+). Its function is as follows. Catalyzes the 2-thiolation of uridine at the wobble position (U34) of tRNA, leading to the formation of s(2)U34. The polypeptide is tRNA-specific 2-thiouridylase MnmA (Desulfotalea psychrophila (strain LSv54 / DSM 12343)).